The following is a 354-amino-acid chain: Inactive ADP-ribosyltransferase ARH2 (354 aa).

Serine 27 carries the phosphoserine modification.

Belongs to the ADP-ribosylglycohydrolase family.

It localises to the cytoplasm. The protein localises to the myofibril. It is found in the sarcomere. Its function is as follows. Required for myofibril assembly and outgrowth of the cardiac chambers in the developing heart. Appears to be catalytically inactive, showing no activity against O-acetyl-ADP-ribose. The polypeptide is Inactive ADP-ribosyltransferase ARH2 (ADPRHL1) (Pongo abelii (Sumatran orangutan)).